The following is a 173-amino-acid chain: Invasion protein B homolog BruAb1_0366 (173 aa).

An N-terminal signal peptide occupies residues 1 to 23; the sequence is MKNYRAIGLAFTFTALSSLSAFA.

The protein belongs to the IalB family.

The chain is Invasion protein B homolog BruAb1_0366 from Brucella abortus biovar 1 (strain 9-941).